The chain runs to 87 residues: Mitochondrial import inner membrane translocase subunit TIM9 (87 aa).

A Twin CX3C motif motif is present at residues 35 to 59 (CFTDCVNDFTSSKLTSKEESCILKC). 2 disulfide bridges follow: C35–C59 and C39–C55.

Belongs to the small Tim family. As to quaternary structure, heterohexamer; composed of 3 copies of TIM9 and 3 copies of TIM10, named soluble 70 kDa complex. Associates with the TIM22 complex, whose core is composed of TIM22 and TIM54. Interacts with the transmembrane regions of multi-pass transmembrane proteins in transit.

It localises to the mitochondrion inner membrane. In terms of biological role, mitochondrial intermembrane chaperone that participates in the import and insertion of multi-pass transmembrane proteins into the mitochondrial inner membrane. Also required for the transfer of beta-barrel precursors from the TOM complex to the sorting and assembly machinery (SAM complex) of the outer membrane. Acts as a chaperone-like protein that protects the hydrophobic precursors from aggregation and guide them through the mitochondrial intermembrane space. The sequence is that of Mitochondrial import inner membrane translocase subunit TIM9 (TIM9) from Candida glabrata (strain ATCC 2001 / BCRC 20586 / JCM 3761 / NBRC 0622 / NRRL Y-65 / CBS 138) (Yeast).